We begin with the raw amino-acid sequence, 111 residues long: Nucleoid-associated protein CYB_2894 (111 aa).

This sequence belongs to the YbaB/EbfC family. Homodimer.

Its subcellular location is the cytoplasm. The protein localises to the nucleoid. In terms of biological role, binds to DNA and alters its conformation. May be involved in regulation of gene expression, nucleoid organization and DNA protection. This is Nucleoid-associated protein CYB_2894 from Synechococcus sp. (strain JA-2-3B'a(2-13)) (Cyanobacteria bacterium Yellowstone B-Prime).